The chain runs to 1383 residues: MAQTLAMTSQFNGRKRVRKFFGKIPEVTEMPNLIEVQKASYDQFLMIEEPKGGRPDEGLQAVFKSVFPISDFSGTAMLEFVGYEFDLPKFDVEECRQRDLTYAAPLKVILRLIVFDVDEDTGSKDIKDIKEQGVYMGDMPLMTTNGTFIVNGTERVIVSQMHRSPGVFFDHDKGKSHSSGKFLFAARVIPYRGSWLDIEFDAKDIIYARIDRRRKIPITSLLMALGMDASDILSTFYNKVTYERDGDGWRIPYSVGRFKGVKLISDLVDADSGEVVAEAGKKLTVRAAKALAEKGLKAVKITEDDLLGSYLAEDIVNYQTGEIYLEAGDEIDEKALKILFDVSADQINILDIDHMNIGAYIRNTLKVDKNESQQDALFDIYRVMRPGEPPTMDTAAAMFHSLFFDPERYDLSAVGRVKMNLRMDLDCPDTVRILRQEDILAVVKMLVELRDGRGEIDDIDNLGNRRVRSVGELMENQYRIGLLRMERAIKERMSSVEIDTVMPQDLINAKPAAAAVREFFGSSQLSQFMDQTNPLSEITHKRRLSALGPGGLTRERAGFEVRDVHPTHYGRICPIETPEGPNIGLINSLATFARVNKYGFIESPYRKIIDGKVTTEVIYLSAMEESKHYVAQANSSLDAEGRFTDEFVVCRHAGEVLMAPRDHVDLMDVSPKQLVSVAAALIPFLENDDANRALMGSNMQRQAVPLVRAEAPFVGTGMESIVARDSGAAVSAKRGGIVDQVDATRIVIRATEDLDPSKSGVDIYRLQKFQRSNQSTCINQRPLVHVGDRVEKGNIIADGPSTDLGDLALGRNVLVAFMPWNGYNYEDSILLSERIVADDVFTSIHIEEFEVAARDTKLGPEEITRDIPNVAEESLRNLDEAGIIYIGAEVQPGDILVGKITPKGESPMTPEEKLLRAIFGEKASDVRDTSMRMPPGAFGTVVEVRVFNRHGVEKDERAMAIEREEIERLAKDRDDEQSILDRNVYARLTDMLTGKIAVEGPKGFSKGKKLDNTIMGHYPRSQWWQFTVEDEKLQSEIEALRRQYDESKEALQRRFMDKVEKVQRGDEMPPGVMKMVKVFVAVKRKIQPGDKMAGRHGNKGVVSRILPIEDMPFLEDGTHADIVLNPLGVPSRMNVGQILETHLGWACAGMGKKIGDLVDLYQETGDIFPLRQRIENLMPDNDHNEPVRQYDNESLYKLALQMRKGVSIATPVFDGAHEADINMMLEDADLDSSGQVVLYDGRTGEPFDRPVTVGYIYMLKLHHLVDDKIHARSIGPYSLVTQQPLGGKAQFGGQRFGEMEVWALEAYGAAYTLQEMLTVKSDDVAGRTKVYEAIVRGDDTFEAGIPESFNVLVKEMRSLALNVELDDARELIAQRVLSDTTEQ.

Belongs to the RNA polymerase beta chain family. As to quaternary structure, the RNAP catalytic core consists of 2 alpha, 1 beta, 1 beta' and 1 omega subunit. When a sigma factor is associated with the core the holoenzyme is formed, which can initiate transcription.

It catalyses the reaction RNA(n) + a ribonucleoside 5'-triphosphate = RNA(n+1) + diphosphate. DNA-dependent RNA polymerase catalyzes the transcription of DNA into RNA using the four ribonucleoside triphosphates as substrates. The protein is DNA-directed RNA polymerase subunit beta of Bartonella quintana (strain Toulouse) (Rochalimaea quintana).